The primary structure comprises 235 residues: Ribosomal RNA small subunit methyltransferase G (235 aa).

S-adenosyl-L-methionine is bound by residues G75, F80, 126–127, and R145; that span reads AE.

Belongs to the methyltransferase superfamily. RNA methyltransferase RsmG family.

The protein resides in the cytoplasm. In terms of biological role, specifically methylates the N7 position of a guanine in 16S rRNA. This Carboxydothermus hydrogenoformans (strain ATCC BAA-161 / DSM 6008 / Z-2901) protein is Ribosomal RNA small subunit methyltransferase G.